The chain runs to 356 residues: Phosphate acyltransferase (356 aa).

The protein belongs to the PlsX family. As to quaternary structure, homodimer. Probably interacts with PlsY.

The protein resides in the cytoplasm. It carries out the reaction a fatty acyl-[ACP] + phosphate = an acyl phosphate + holo-[ACP]. It participates in lipid metabolism; phospholipid metabolism. Functionally, catalyzes the reversible formation of acyl-phosphate (acyl-PO(4)) from acyl-[acyl-carrier-protein] (acyl-ACP). This enzyme utilizes acyl-ACP as fatty acyl donor, but not acyl-CoA. The polypeptide is Phosphate acyltransferase (Xanthobacter autotrophicus (strain ATCC BAA-1158 / Py2)).